Here is a 629-residue protein sequence, read N- to C-terminus: Probable indole-3-acetic acid-amido synthetase GH3.4 (629 aa).

It belongs to the IAA-amido conjugating enzyme family. Expressed in flowers.

May catalyze the synthesis of indole-3-acetic acid (IAA)-amino acid conjugates, providing a mechanism for the plant to cope with the presence of excess auxin. The protein is Probable indole-3-acetic acid-amido synthetase GH3.4 (GH3.4) of Oryza sativa subsp. japonica (Rice).